Here is a 1647-residue protein sequence, read N- to C-terminus: Transcription elongation factor SPT6 homolog (1647 aa).

The segment at 1–209 (MARNAISDDE…SKKKKYRQGS (209 aa)) is disordered. A compositionally biased stretch (acidic residues) spans 7–20 (SDDEEDHELEDDDG). The segment covering 21-30 (EPVHGDPAEH) has biased composition (basic and acidic residues). The segment covering 31-67 (DENDDEEDDDDVGNEYENDGFIVNDEDEEEEEEEDEE) has biased composition (acidic residues). Residues 103 to 114 (KFKKRQYKRLKK) are compositionally biased toward basic residues. Basic and acidic residues predominate over residues 132–151 (DSRGGTRRSAEDKIKDRLFD). The segment covering 152 to 191 (DVDVDDPPDDVGDEEDLVVEEDVVGSEDEMADFIVDEDDE) has biased composition (acidic residues). An S1 motif domain is found at 1103–1174 (GRIVQASVRR…QRYQVFLICK (72 aa)). Residues 1429–1647 (PMRSPADHGS…RKSDGGGGGW (219 aa)) are disordered. A run of 2 repeats spans residues 1443 to 1444 (GW) and 1452 to 1453 (GW). Residues 1443–1647 (GWGSSQSEGG…RKSDGGGGGW (205 aa)) form a 12 X 2 AA repeats of [WG]-[GW] repeats region. A compositionally biased stretch (gly residues) spans 1462–1471 (SGRGGEYRNG). Basic and acidic residues predominate over residues 1496 to 1507 (RRDDMNSDRQDG). 6 consecutive repeat copies span residues 1511 to 1512 (WG), 1522 to 1523 (GW), 1530 to 1531 (GW), 1547 to 1548 (GW), 1563 to 1564 (WG), and 1574 to 1575 (GW). Composition is skewed to gly residues over residues 1519–1532 (ADGGWGNSGGGGWG), 1539–1552 (KTGGGSTGGWGSES), 1561–1579 (GSWGSGSGGGGSGGWGNDS), and 1588–1600 (GGFGSGSGGGGSD). Tandem repeats lie at residues 1601 to 1602 (WG), 1615 to 1616 (GW), 1630 to 1631 (GW), and 1646 to 1647 (GW).

Belongs to the SPT6 family. As to quaternary structure, interacts (via N-terminus) with IWS1. Expressed in shoot apical meristem, leaf primordia, vasculature of young leaves, inflorescence meristem, floral meristem, young floral organs, developing ovules and anthers.

It is found in the nucleus. Transcription elongation factor that enhances the transcription elongation by RNA polymerase II (RNAPII). Plays an important role in regulating embryo apical and basal patterning during early embryogenesis, partly through negative regulation of the transcription factors PHABULOSA and PHAVOLUTA. The protein is Transcription elongation factor SPT6 homolog of Arabidopsis thaliana (Mouse-ear cress).